The following is a 182-amino-acid chain: Bifunctional protein PyrR (182 aa).

The PRPP-binding motif lies at 99–111 (IVLVDDVLFTGRT).

Belongs to the purine/pyrimidine phosphoribosyltransferase family. PyrR subfamily. As to quaternary structure, homodimer and homohexamer; in equilibrium.

The catalysed reaction is UMP + diphosphate = 5-phospho-alpha-D-ribose 1-diphosphate + uracil. In terms of biological role, regulates transcriptional attenuation of the pyrimidine nucleotide (pyr) operon by binding in a uridine-dependent manner to specific sites on pyr mRNA. This disrupts an antiterminator hairpin in the RNA and favors formation of a downstream transcription terminator, leading to a reduced expression of downstream genes. Its function is as follows. Also displays a weak uracil phosphoribosyltransferase activity which is not physiologically significant. The chain is Bifunctional protein PyrR from Caldicellulosiruptor bescii (strain ATCC BAA-1888 / DSM 6725 / KCTC 15123 / Z-1320) (Anaerocellum thermophilum).